The sequence spans 233 residues: Probable tetraheme cytochrome c-type (233 aa).

Positions 1-28 are cleaved as a signal peptide; that stretch reads MTRLQKGSIGTLLTGALLGIVLVAVVFG. C39, C42, M45, C67, C70, H71, E93, C131, C134, H135, C159, C162, H163, and H168 together coordinate heme. Residues 182–233 form a disordered region; sequence QGKLVLKPEDDGDDEEADEDEDEETEEADDSSDSESASSSDNSDNEDDNNDE. Composition is skewed to acidic residues over residues 191 to 214 and 224 to 233; these read DDGD…DSSD and SDNEDDNNDE.

This sequence belongs to the NapC/NirT/NrfH family. Binds 4 heme groups per subunit.

It localises to the periplasm. The protein is Probable tetraheme cytochrome c-type (cycX1) of Nitrosomonas europaea (strain ATCC 19718 / CIP 103999 / KCTC 2705 / NBRC 14298).